The following is a 713-amino-acid chain: Phosphoribosylformylglycinamidine synthase subunit PurL (713 aa).

The span at 1–17 (MSLSPSDRELVTEELGR) shows a compositional bias: basic and acidic residues. The tract at residues 1-20 (MSLSPSDRELVTEELGREPT) is disordered. Histidine 34 is a catalytic residue. Tyrosine 37 provides a ligand contact to ATP. Glutamate 85 is a Mg(2+) binding site. Substrate-binding positions include 86 to 89 (SHNH) and arginine 108. Histidine 87 serves as the catalytic Proton acceptor. Residue aspartate 109 participates in Mg(2+) binding. Glutamine 233 is a binding site for substrate. A Mg(2+)-binding site is contributed by aspartate 261. 305-307 (ESQ) serves as a coordination point for substrate. Positions 480 and 517 each coordinate ATP. Asparagine 518 provides a ligand contact to Mg(2+). Serine 520 is a substrate binding site.

The protein belongs to the FGAMS family. Monomer. Part of the FGAM synthase complex composed of 1 PurL, 1 PurQ and 2 PurS subunits.

It localises to the cytoplasm. It catalyses the reaction N(2)-formyl-N(1)-(5-phospho-beta-D-ribosyl)glycinamide + L-glutamine + ATP + H2O = 2-formamido-N(1)-(5-O-phospho-beta-D-ribosyl)acetamidine + L-glutamate + ADP + phosphate + H(+). Its pathway is purine metabolism; IMP biosynthesis via de novo pathway; 5-amino-1-(5-phospho-D-ribosyl)imidazole from N(2)-formyl-N(1)-(5-phospho-D-ribosyl)glycinamide: step 1/2. Functionally, part of the phosphoribosylformylglycinamidine synthase complex involved in the purines biosynthetic pathway. Catalyzes the ATP-dependent conversion of formylglycinamide ribonucleotide (FGAR) and glutamine to yield formylglycinamidine ribonucleotide (FGAM) and glutamate. The FGAM synthase complex is composed of three subunits. PurQ produces an ammonia molecule by converting glutamine to glutamate. PurL transfers the ammonia molecule to FGAR to form FGAM in an ATP-dependent manner. PurS interacts with PurQ and PurL and is thought to assist in the transfer of the ammonia molecule from PurQ to PurL. The polypeptide is Phosphoribosylformylglycinamidine synthase subunit PurL (Natronomonas pharaonis (strain ATCC 35678 / DSM 2160 / CIP 103997 / JCM 8858 / NBRC 14720 / NCIMB 2260 / Gabara) (Halobacterium pharaonis)).